The chain runs to 465 residues: Argininosuccinate lyase (465 aa).

This sequence belongs to the lyase 1 family. Argininosuccinate lyase subfamily.

The protein resides in the cytoplasm. It carries out the reaction 2-(N(omega)-L-arginino)succinate = fumarate + L-arginine. The protein operates within amino-acid biosynthesis; L-arginine biosynthesis; L-arginine from L-ornithine and carbamoyl phosphate: step 3/3. This Variovorax paradoxus (strain S110) protein is Argininosuccinate lyase.